Consider the following 403-residue polypeptide: Phosphoglycerate kinase (403 aa).

Substrate is bound by residues aspartate 24–asparagine 26, arginine 39, histidine 62–arginine 65, arginine 121, and arginine 161. Residues lysine 211, glycine 299, glutamate 330, and glycine 359–serine 362 contribute to the ATP site.

It belongs to the phosphoglycerate kinase family. In terms of assembly, monomer.

The protein localises to the cytoplasm. It carries out the reaction (2R)-3-phosphoglycerate + ATP = (2R)-3-phospho-glyceroyl phosphate + ADP. It functions in the pathway carbohydrate degradation; glycolysis; pyruvate from D-glyceraldehyde 3-phosphate: step 2/5. This is Phosphoglycerate kinase from Corynebacterium kroppenstedtii (strain DSM 44385 / JCM 11950 / CIP 105744 / CCUG 35717).